The sequence spans 132 residues: Ribosome-binding factor A (132 aa).

It belongs to the RbfA family. As to quaternary structure, monomer. Binds 30S ribosomal subunits, but not 50S ribosomal subunits or 70S ribosomes.

The protein localises to the cytoplasm. One of several proteins that assist in the late maturation steps of the functional core of the 30S ribosomal subunit. Associates with free 30S ribosomal subunits (but not with 30S subunits that are part of 70S ribosomes or polysomes). Required for efficient processing of 16S rRNA. May interact with the 5'-terminal helix region of 16S rRNA. The chain is Ribosome-binding factor A from Pseudomonas entomophila (strain L48).